Here is a 599-residue protein sequence, read N- to C-terminus: Calcium-dependent protein kinase 10 (599 aa).

A lipid anchor (N-myristoyl glycine) is attached at Gly2. Residues 27–110 (RQDGDDALPG…PRPRVPPVKR (84 aa)) are disordered. Positions 74 to 84 (VSTTDTASAEQ) are enriched in polar residues. The span at 87–98 (SKSSAGSDSGEA) shows a compositional bias: low complexity. Positions 133 to 391 (YSLGRKLGQG…AHEVLRHPWV (259 aa)) constitute a Protein kinase domain. Residues 139-147 (LGQGQFGTT) and Lys162 each bind ATP. The active-site Proton acceptor is the Asp257. The autoinhibitory domain stretch occupies residues 397–427 (APDKPLDSAVLSRMKQFSAMNKLKKMALRVI). 4 EF-hand domains span residues 434–469 (DEIA…VGAN), 470–505 (LQES…MNKI), 506–541 (ERED…FGLG), and 544–575 (QLEE…PTMG). Asp447, Asp449, Ser451, Gln453, Glu458, Asp483, Asp485, Ser487, Thr489, Glu494, Asp519, Asp521, Ser523, Tyr525, Glu530, Asp553, Asp555, Asp557, Arg559, and Glu564 together coordinate Ca(2+).

The protein belongs to the protein kinase superfamily. Ser/Thr protein kinase family. CDPK subfamily. As to expression, expressed in roots.

The protein resides in the membrane. The catalysed reaction is L-seryl-[protein] + ATP = O-phospho-L-seryl-[protein] + ADP + H(+). It carries out the reaction L-threonyl-[protein] + ATP = O-phospho-L-threonyl-[protein] + ADP + H(+). With respect to regulation, activated by calcium. Autophosphorylation may play an important role in the regulation of the kinase activity. May play a role in signal transduction pathways that involve calcium as a second messenger. In Oryza sativa subsp. japonica (Rice), this protein is Calcium-dependent protein kinase 10.